The chain runs to 266 residues: Small ribosomal subunit protein eS1 (266 aa).

The disordered stretch occupies residues 237–266; that stretch reads DGGSKTGEVGETGSKVDRPEGYEPPVQETV.

It belongs to the eukaryotic ribosomal protein eS1 family. Component of the small ribosomal subunit. Mature ribosomes consist of a small (40S) and a large (60S) subunit. The 40S subunit contains about 33 different proteins and 1 molecule of RNA (18S). The 60S subunit contains about 49 different proteins and 3 molecules of RNA (28S, 5.8S and 5S).

The protein localises to the cytoplasm. The chain is Small ribosomal subunit protein eS1 from Lysiphlebus testaceipes (Greenbugs aphid parastoid).